The primary structure comprises 364 residues: Ribosomal RNA large subunit methyltransferase F (364 aa).

The interval 1-30 is disordered; the sequence is MTNKRKSAKPLEPAKRAPKPRTKKSRDLSA.

The protein belongs to the methyltransferase superfamily. METTL16/RlmF family.

Its subcellular location is the cytoplasm. The enzyme catalyses adenosine(1618) in 23S rRNA + S-adenosyl-L-methionine = N(6)-methyladenosine(1618) in 23S rRNA + S-adenosyl-L-homocysteine + H(+). Functionally, specifically methylates the adenine in position 1618 of 23S rRNA. The sequence is that of Ribosomal RNA large subunit methyltransferase F from Vibrio vulnificus (strain CMCP6).